Reading from the N-terminus, the 171-residue chain is Viral CASP8 and FADD-like apoptosis regulator (171 aa).

2 DED domains span residues 1-74 and 92-171; these read MSHY…RIFG and PFRC…NLQV.

As to quaternary structure, associates with the death-inducing signaling complex (DISC) formed by TNFRSF6, FADD and caspase-8. Interacts with FADD.

Functionally, inhibits TNFRSF1A, TNFRSF6, TNFRSF10 and TNFRSF12 induced apoptosis. May interfere with caspase-8 recruitment and activation at the death-inducing signaling complex (DISC). May lead to higher virus production and contribute to virus persistence and oncogenicity. The protein is Viral CASP8 and FADD-like apoptosis regulator of Equus caballus (Horse).